The following is a 90-amino-acid chain: Albumin-1 (90 aa).

Residue Ala1 is a signal peptide. 3 disulfides stabilise this stretch: Cys4/Cys21, Cys8/Cys23, and Cys16/Cys34. A propeptide spanning residues 40–47 is cleaved from the precursor; the sequence is LSSVAKMI.

Post-translationally, the C-terminal glycine may be removed from A1b.

A1b binds to basic 7S globulin (BG) and stimulates its phosphorylation activity. The sequence is that of Albumin-1 (LEG) from Phaseolus angularis (Azuki bean).